Here is a 20-residue protein sequence, read N- to C-terminus: GSSFCDSKCAVRCSKAGVQD.

The protein belongs to the GASA family. As to expression, expressed in pulp (aril) of fruits (at protein level).

The chain is Pommaclein from Punica granatum (Pomegranate).